The following is a 985-amino-acid chain: Thioredoxin domain-containing protein 11 (985 aa).

Residues 1–11 show a composition bias toward gly residues; the sequence is MSECGGRGGGS. Residues 1-38 are disordered; that stretch reads MSECGGRGGGSSSSEDAEDEGGGGGGPAGSDCLSSSPT. The span at 29–38 shows a compositional bias: low complexity; the sequence is GSDCLSSSPT. A helical transmembrane segment spans residues 65-85; sequence LLCGAVALGCALLLALKFTCS. One can recognise a Thioredoxin 1 domain in the interval 92-214; that stretch reads IPAKPPVSFF…IEKFVRRVMK (123 aa). 2 disulfide bridges follow: Cys469–Cys472 and Cys719–Cys722. The 151-residue stretch at 649-799 folds into the Thioredoxin 2 domain; the sequence is LDPKQALMKL…LLRFILHHSD (151 aa). Positions 821-919 form a coiled coil; the sequence is VLQRGHISHL…ASENLLTENT (99 aa). Position 828 is a phosphoserine (Ser828). Residues 935–985 are disordered; the sequence is RDGAESLAAQREVHPKQPEPSATPQLPGSSPPPANVSATLVSERNKENRTD.

This sequence belongs to the protein disulfide isomerase family. As to quaternary structure, interacts with the cytoplasmic part of DUOX1 and DUOX2. Interacts with TPO and CYBA. Widely expressed at low level. Expressed at higher level in thyroid and prostate.

Its subcellular location is the endoplasmic reticulum membrane. Its function is as follows. May act as a redox regulator involved in DUOX proteins folding. The interaction with DUOX1 and DUOX2 suggest that it belongs to a multiprotein complex constituting the thyroid H(2)O(2) generating system. It is however not sufficient to assist DUOX1 and DUOX2 in H(2)O(2) generation. This chain is Thioredoxin domain-containing protein 11 (TXNDC11), found in Homo sapiens (Human).